The chain runs to 161 residues: Leucine-rich colipase-like protein 1 (161 aa).

Positions 1–25 (MSVSVWPPLLLLLLLLLLWAVPTFQ) are cleaved as a signal peptide.

This is Leucine-rich colipase-like protein 1 (Lrcol1) from Mus musculus (Mouse).